A 251-amino-acid chain; its full sequence is tRNA (guanine-N(1)-)-methyltransferase (251 aa).

S-adenosyl-L-methionine-binding positions include glycine 113 and 133–138 (IGDYVL).

Belongs to the RNA methyltransferase TrmD family. As to quaternary structure, homodimer.

The protein localises to the cytoplasm. It catalyses the reaction guanosine(37) in tRNA + S-adenosyl-L-methionine = N(1)-methylguanosine(37) in tRNA + S-adenosyl-L-homocysteine + H(+). In terms of biological role, specifically methylates guanosine-37 in various tRNAs. This chain is tRNA (guanine-N(1)-)-methyltransferase, found in Pectobacterium carotovorum subsp. carotovorum (strain PC1).